A 529-amino-acid chain; its full sequence is Lanosterol 14-alpha demethylase (529 aa).

Residue cysteine 468 coordinates heme.

The protein belongs to the cytochrome P450 family. The cofactor is heme.

The protein localises to the membrane. It catalyses the reaction a 14alpha-methyl steroid + 3 reduced [NADPH--hemoprotein reductase] + 3 O2 = a Delta(14) steroid + formate + 3 oxidized [NADPH--hemoprotein reductase] + 4 H2O + 4 H(+). The catalysed reaction is a 14alpha-methyl steroid + reduced [NADPH--hemoprotein reductase] + O2 = a 14alpha-hydroxymethyl steroid + oxidized [NADPH--hemoprotein reductase] + H2O + H(+). It carries out the reaction a 14alpha-hydroxymethyl steroid + reduced [NADPH--hemoprotein reductase] + O2 = a 14alpha-formyl steroid + oxidized [NADPH--hemoprotein reductase] + 2 H2O + H(+). The enzyme catalyses a 14alpha-formyl steroid + reduced [NADPH--hemoprotein reductase] + O2 = a Delta(14) steroid + formate + oxidized [NADPH--hemoprotein reductase] + H2O + 2 H(+). It catalyses the reaction lanosterol + 3 reduced [NADPH--hemoprotein reductase] + 3 O2 = 4,4-dimethyl-5alpha-cholesta-8,14,24-trien-3beta-ol + formate + 3 oxidized [NADPH--hemoprotein reductase] + 4 H2O + 4 H(+). The catalysed reaction is lanosterol + reduced [NADPH--hemoprotein reductase] + O2 = 32-hydroxylanosterol + oxidized [NADPH--hemoprotein reductase] + H2O + H(+). It carries out the reaction 32-hydroxylanosterol + reduced [NADPH--hemoprotein reductase] + O2 = 32-oxolanosterol + oxidized [NADPH--hemoprotein reductase] + 2 H2O + H(+). The enzyme catalyses 32-oxolanosterol + reduced [NADPH--hemoprotein reductase] + O2 = 4,4-dimethyl-5alpha-cholesta-8,14,24-trien-3beta-ol + formate + oxidized [NADPH--hemoprotein reductase] + H2O + 2 H(+). It catalyses the reaction eburicol + 3 reduced [NADPH--hemoprotein reductase] + 3 O2 = 14-demethyleburicol + formate + 3 oxidized [NADPH--hemoprotein reductase] + 4 H2O + 4 H(+). The catalysed reaction is eburicol + reduced [NADPH--hemoprotein reductase] + O2 = 32-hydroxyeburicol + oxidized [NADPH--hemoprotein reductase] + H2O + H(+). It carries out the reaction 32-hydroxyeburicol + reduced [NADPH--hemoprotein reductase] + O2 = 32-oxoeburicol + oxidized [NADPH--hemoprotein reductase] + 2 H2O + H(+). The enzyme catalyses 32-oxoeburicol + reduced [NADPH--hemoprotein reductase] + O2 = 14-demethyleburicol + formate + oxidized [NADPH--hemoprotein reductase] + H2O + 2 H(+). It participates in steroid biosynthesis; zymosterol biosynthesis; zymosterol from lanosterol: step 1/6. Sterol 14alpha-demethylase that plays a critical role in the third module of ergosterol biosynthesis pathway, being ergosterol the major sterol component in fungal membranes that participates in a variety of functions. The third module or late pathway involves the ergosterol synthesis itself through consecutive reactions that mainly occur in the endoplasmic reticulum (ER) membrane. In filamentous fungi, during the initial step of this module, lanosterol (lanosta-8,24-dien-3beta-ol) can be metabolized to eburicol. Sterol 14alpha-demethylase catalyzes the three-step oxidative removal of the 14alpha-methyl group (C-32) of both these sterols in the form of formate, and converts eburicol and lanosterol to 14-demethyleburicol (4,4,24-trimethylergosta-8,14,24(28)-trienol) and 4,4-dimethyl-5alpha-cholesta-8,14,24-trien-3beta-ol, respectively, which are further metabolized by other enzymes in the pathway to ergosterol. Can also use substrates not intrinsic to fungi, such as 24,25-dihydrolanosterol (DHL), producing 4,4-dimethyl-8,14-cholestadien-3-beta-ol, but at lower rates than the endogenous substrates. This chain is Lanosterol 14-alpha demethylase (ERG11), found in Eremothecium gossypii (strain ATCC 10895 / CBS 109.51 / FGSC 9923 / NRRL Y-1056) (Yeast).